Consider the following 301-residue polypeptide: Growth-regulating factor 2 (301 aa).

The 36-residue stretch at 11 to 46 (LFTATQWQELEHQALIYKYMAAGAPVPPDLLLHLRH) folds into the QLQ domain. 2 consecutive short sequence motifs (bipartite nuclear localization signal) follow at residues 83–102 (RRVEDPEPGRCRRTDGKKWR) and 120–127 (RGKNRSRK). In terms of domain architecture, WRC spans 87–131 (DPEPGRCRRTDGKKWRCSREAYGESKYCEKHMHRGKNRSRKPVEM).

It belongs to the GRF family.

The protein resides in the nucleus. Functionally, transcription activator that plays a regulatory role in gibberellin-induced stem elongation. The protein is Growth-regulating factor 2 (GRF2) of Oryza sativa subsp. japonica (Rice).